Reading from the N-terminus, the 1657-residue chain is A disintegrin and metalloproteinase with thrombospondin motifs 7 (1657 aa).

A signal peptide spans 1 to 20; it reads MHRGPSLLLILCALASRVLG. The propeptide occupies 21 to 220; sequence PASGLVTEGR…QQQQKRRQQR (200 aa). An N-linked (GlcNAc...) asparagine glycan is attached at Asn-84. A disordered region spans residues 165–221; the sequence is PGHAQPHVVYKHQGSRKQAQQGDSRPSGTCGMQVPPDLEQQREHWEQQQQKRRQQRS. Positions 180–191 are enriched in polar residues; it reads RKQAQQGDSRPS. The short motif at 192–199 is the Cysteine switch element; it reads GTCGMQVP. Zn(2+) is bound at residue Cys-194. A Peptidase M12B domain is found at 226 to 437; it reads KWVETLVVAD…GWGLCLDDRP (212 aa). Intrachain disulfides connect Cys-302–Cys-356, Cys-331–Cys-338, Cys-350–Cys-432, Cys-389–Cys-416, Cys-459–Cys-482, Cys-470–Cys-488, Cys-477–Cys-507, Cys-501–Cys-512, Cys-535–Cys-572, Cys-539–Cys-577, and Cys-550–Cys-562. Residue His-372 participates in Zn(2+) binding. Glu-373 is an active-site residue. Zn(2+) is bound by residues His-376 and His-382. The 76-residue stretch at 447–522 folds into the Disintegrin domain; it reads VLPGVLYDVN…VPEGFQPEAV (76 aa). The 56-residue stretch at 523 to 578 folds into the TSP type-1 1 domain; that stretch reads DGGWSGWSAWSDCSRSCGVGVRSSERQCTQPVPKNRGKYCVGERKRSQLCNLPACP. The N-linked (GlcNAc...) asparagine glycan is linked to Asn-622. A spacer region spans residues 683–794; that stretch reads QTVSRTFKET…PGVHYQYTIQ (112 aa). 3 consecutive TSP type-1 domains span residues 804 to 863, 864 to 923, and 925 to 978; these read PEFS…EPCP, PRWW…NRHV, and CPST…QPCQ. Disordered regions lie at residues 1009-1034, 1073-1127, 1140-1237, 1283-1304, and 1317-1384; these read LAPRPSPASSPKPVSISNAIDEEELD, GGWT…GLEQ, EDTP…DVVE, GRDSPLEPGTPTFSSPELSSQH, and TVPT…ARNA. A compositionally biased stretch (pro residues) spans 1211–1224; the sequence is PQSPIPTQPSPPSI. Polar residues-rich tracts occupy residues 1293–1304 and 1327–1342; these read PTFSSPELSSQH and PSGQPQTPNLEGTQSP. 4 TSP type-1 domains span residues 1366–1414, 1417–1477, 1479–1522, and 1524–1584; these read QPSL…SGND, CTLA…CQPG, TKPP…PEPG, and CEES…LCSH. Residues 1587–1627 enclose the PLAC domain; the sequence is WPESSRPCATEDCELVEPPRCERDRLSFNFCETLRLLGRCQ.

As to quaternary structure, interacts with COMP. The cofactor is Zn(2+). Post-translationally, N-glycosylated. Can be O-fucosylated by POFUT2 on a serine or a threonine residue found within the consensus sequence C1-X(2)-(S/T)-C2-G of the TSP type-1 repeat domains where C1 and C2 are the first and second cysteine residue of the repeat, respectively. Fucosylated repeats can then be further glycosylated by the addition of a beta-1,3-glucose residue by the glucosyltransferase, B3GALTL. Fucosylation mediates the efficient secretion of ADAMTS family members. Can also be C-glycosylated with one or two mannose molecules on tryptophan residues within the consensus sequence W-X-X-W of the TPRs. N- and C-glycosylations can also facilitate secretion. O-glycosylated proteoglycan; contains chondroitin sulfate. In terms of processing, may be cleaved by a furin endopeptidase. The precursor is sequentially processed.

The protein resides in the secreted. The protein localises to the extracellular space. Its subcellular location is the extracellular matrix. Its function is as follows. Metalloprotease. Was previously shown to degrade COMP. However, a later study found no activity against COMP. The protein is A disintegrin and metalloproteinase with thrombospondin motifs 7 (Adamts7) of Mus musculus (Mouse).